The sequence spans 333 residues: Ribosomal RNA small subunit methyltransferase H (333 aa).

Residues 39–41 (GGY), D57, F84, D101, and Q108 each bind S-adenosyl-L-methionine.

Belongs to the methyltransferase superfamily. RsmH family.

Its subcellular location is the cytoplasm. It carries out the reaction cytidine(1402) in 16S rRNA + S-adenosyl-L-methionine = N(4)-methylcytidine(1402) in 16S rRNA + S-adenosyl-L-homocysteine + H(+). Specifically methylates the N4 position of cytidine in position 1402 (C1402) of 16S rRNA. The chain is Ribosomal RNA small subunit methyltransferase H from Dinoroseobacter shibae (strain DSM 16493 / NCIMB 14021 / DFL 12).